The sequence spans 228 residues: Large ribosomal subunit protein uL3 (228 aa).

The protein belongs to the universal ribosomal protein uL3 family. In terms of assembly, part of the 50S ribosomal subunit. Forms a cluster with proteins L14 and L19.

One of the primary rRNA binding proteins, it binds directly near the 3'-end of the 23S rRNA, where it nucleates assembly of the 50S subunit. This Leuconostoc mesenteroides subsp. mesenteroides (strain ATCC 8293 / DSM 20343 / BCRC 11652 / CCM 1803 / JCM 6124 / NCDO 523 / NBRC 100496 / NCIMB 8023 / NCTC 12954 / NRRL B-1118 / 37Y) protein is Large ribosomal subunit protein uL3.